A 320-amino-acid polypeptide reads, in one-letter code: Atrochrysone carboxyl ACP thioesterase (320 aa).

Positions 103, 105, 107, and 108 each coordinate Zn(2+). D107 serves as the catalytic Proton donor/acceptor.

Belongs to the metallo-beta-lactamase superfamily. Requires Zn(2+) as cofactor.

It carries out the reaction atrochrysone carboxyl-[ACP] + H2O = atrochrysone carboxylate + holo-[ACP] + H(+). It functions in the pathway secondary metabolite biosynthesis. In terms of biological role, atrochrysone carboxyl ACP thioesterase; part of the gene cluster that mediates the biosynthesis of geodin, an intermediate in the biosynthesis of other natural products. The pathway begins with the synthesis of atrochrysone thioester by the polyketide synthase (PKS) gedC. The atrochrysone carboxyl ACP thioesterase gedB then breaks the thioester bond and releases the atrochrysone carboxylic acid from gedC. The atrochrysone carboxylic acid is then converted to atrochrysone which is further transformed into emodinanthrone. The next step is performed by the emodinanthrone oxygenase gedH that catalyzes the oxidation of emodinanthrone to emodin. Emodin O-methyltransferase encoded probably by gedA then catalyzes methylation of the 8-hydroxy group of emodin to form questin. Ring cleavage of questin by questin oxidase gedK leads to desmethylsulochrin via several intermediates including questin epoxide. Another methylation step probably catalyzed by methyltransferase gedG leads to the formation of sulochrin which is further converted to dihydrogeodin by the sulochrin halogenase gedL. Finally, the dihydrogeodin oxidase gedJ catalyzes the stereospecific phenol oxidative coupling reaction converting dihydrogeodin to geodin. The chain is Atrochrysone carboxyl ACP thioesterase from Aspergillus terreus (strain NIH 2624 / FGSC A1156).